The chain runs to 122 residues: Large ribosomal subunit protein uL14 (122 aa).

It belongs to the universal ribosomal protein uL14 family. In terms of assembly, part of the 50S ribosomal subunit. Forms a cluster with proteins L3 and L19. In the 70S ribosome, L14 and L19 interact and together make contacts with the 16S rRNA in bridges B5 and B8.

In terms of biological role, binds to 23S rRNA. Forms part of two intersubunit bridges in the 70S ribosome. The chain is Large ribosomal subunit protein uL14 from Sphingopyxis alaskensis (strain DSM 13593 / LMG 18877 / RB2256) (Sphingomonas alaskensis).